We begin with the raw amino-acid sequence, 199 residues long: Protein-methionine-sulfoxide reductase heme-binding subunit MsrQ (199 aa).

4 helical membrane passes run 10–30, 82–102, 116–136, and 153–173; these read WLKV…FWAI, LWCF…ELGI, PYLT…LTST, and VVYL…KILS.

It belongs to the MsrQ family. In terms of assembly, heterodimer of a catalytic subunit (MsrP) and a heme-binding subunit (MsrQ). The cofactor is FMN. Requires heme b as cofactor.

The protein localises to the cell inner membrane. Its function is as follows. Part of the MsrPQ system that repairs oxidized periplasmic proteins containing methionine sulfoxide residues (Met-O), using respiratory chain electrons. Thus protects these proteins from oxidative-stress damage caused by reactive species of oxygen and chlorine generated by the host defense mechanisms. MsrPQ is essential for the maintenance of envelope integrity under bleach stress, rescuing a wide series of structurally unrelated periplasmic proteins from methionine oxidation, including the primary periplasmic chaperone SurA and the lipoprotein Pal. MsrQ provides electrons for reduction to the reductase catalytic subunit MsrP, using the quinone pool of the respiratory chain. The polypeptide is Protein-methionine-sulfoxide reductase heme-binding subunit MsrQ (Salmonella dublin (strain CT_02021853)).